The following is a 333-amino-acid chain: Coiled-coil domain-containing protein 68 (333 aa).

Coiled coils occupy residues 86 to 120 (LDLLMENMRRKDQQLLEMNRENEVLQIKLEASREA) and 160 to 302 (EKEQ…HWTE).

In terms of assembly, interacts with CEP170.

The protein resides in the cytoplasm. Its subcellular location is the cytoskeleton. It localises to the microtubule organizing center. The protein localises to the centrosome. It is found in the centriole. Centriolar protein required for centriole subdistal appendage assembly and microtubule anchoring in interphase cells. Together with CCDC120, cooperate with subdistal appendage components ODF2, NIN and CEP170 for hierarchical subdistal appendage assembly. The sequence is that of Coiled-coil domain-containing protein 68 (Ccdc68) from Mus musculus (Mouse).